The chain runs to 271 residues: Collectin-11 (271 aa).

The N-terminal stretch at 1 to 25 is a signal peptide; that stretch reads MVGEKLVAYMLVSVLGLALLRSVFG. Residues 44 to 103 form the Collagen-like domain; it reads GEAGEKGEKGAPGRPGRVGPTGEQGPPGDKGQKGSPGRYGKMGPTGPKGLKGDMGDPGPK. The tract at residues 46–112 is disordered; that stretch reads AGEKGEKGAP…KGPNGEPGVP (67 aa). The stretch at 124–148 forms a coiled coil; that stretch reads EMDIQVVQLTNELKFIKNAVAGIKE. One can recognise a C-type lectin domain in the interval 149 to 265; it reads TDSKVYLLVK…CQLTMYFVCE (117 aa). 2 disulfide bridges follow: Cys-170–Cys-264 and Cys-242–Cys-256. Arg-200 contacts a carbohydrate. Ca(2+)-binding residues include Asp-207, Glu-211, Glu-232, Asn-234, Asn-235, Asp-238, Glu-240, and Asp-241. An a carbohydrate-binding site is contributed by Glu-240. A carbohydrate-binding positions include Glu-244 and 252-254; that span reads IDV. Asp-253 contributes to the Ca(2+) binding site.

This sequence belongs to the COLEC10/COLEC11 family. Homotrimer; disulfide-linked. Interacts with MASP1; probably triggers the lectin pathway of complement.

It is found in the secreted. In terms of biological role, lectin that plays a role in innate immunity, apoptosis and embryogenesis. Calcium-dependent lectin that binds self and non-self glycoproteins presenting high mannose oligosaccharides with at least one terminal alpha-1,2-linked mannose epitope. Primarily recognizes the terminal disaccharide of the glycan. Also recognizes a subset of fucosylated glycans and lipopolysaccharides. Plays a role in innate immunity through its ability to bind non-self sugars presented by microorganisms and to activate the complement through the recruitment of MAPS1. Also plays a role in apoptosis through its ability to bind in a calcium-independent manner the DNA present at the surface of apoptotic cells and to activate the complement in response to this binding. Finally, plays a role in development, probably serving as a guidance cue during the migration of neural crest cells and other cell types during embryogenesis. The sequence is that of Collectin-11 (colec11) from Danio rerio (Zebrafish).